The following is a 120-amino-acid chain: ATP-dependent Clp protease adapter protein ClpS (120 aa).

This sequence belongs to the ClpS family. In terms of assembly, binds to the N-terminal domain of the chaperone ClpA.

Functionally, involved in the modulation of the specificity of the ClpAP-mediated ATP-dependent protein degradation. The sequence is that of ATP-dependent Clp protease adapter protein ClpS from Pseudomonas savastanoi pv. phaseolicola (strain 1448A / Race 6) (Pseudomonas syringae pv. phaseolicola (strain 1448A / Race 6)).